We begin with the raw amino-acid sequence, 630 residues long: MSKIIGIDLGTTNSCVSVMEGNSPVVVPNSEGKRTTPSIIAFIEGGETKVGDPAKRQAVTNPSKTIFSIKRFMGRNFSEVTEELKNIPYKIIKGENDTPRVSIGNKLYTPQEISAMILQKMKKTAEDYLGNEVKQAVITVPAYFNDAQRQATKEAGEIAGLNVERIINEPTAAALAYGLDKNNQNKKIVVYDLGGGTFDISILELGDGVFEVLSTSGDTHLGGDDFDKVIIDWLVKEFKVEQGVDLSNDSMAYQRLKESAEKAKIELSSSTKTEINLPYITATPSGPKHLVKTLTRAKFEELSDDLIKRSLYPCKNALKASNLISKDIDEVILVGGSTRIPKIQEQVEKFFEKIPSKGVNPDEVVSIGAAIQGGVLSGDVKDVLLLDVTPLSLGIETLGGVFTKLIDSNTTIPTKKSEIFSTATDNQSAVTIRVGQGERSMFNDNKEIGRFDLIDIAPAPRGIPQIEVTFDIDANGILNVSAKDKSTGKEQSIRIQASSGLSKNEIERMKKEAQENADKDNKIKEEIEKINSADSIIFQTEKQLKEYGNKISEETKKKLEINLNNLKDARNSKNISDIDNYINKINNILSSSYQEIYKNNESVKNNESVKNNESVKNNESVKDVDFEEIK.

Position 197 is a phosphothreonine; by autocatalysis (T197). Positions 604–618 (KNNESVKNNESVKNN) are enriched in polar residues. Residues 604-630 (KNNESVKNNESVKNNESVKDVDFEEIK) are disordered. Positions 619 to 630 (ESVKDVDFEEIK) are enriched in basic and acidic residues.

Belongs to the heat shock protein 70 family.

Its function is as follows. Acts as a chaperone. The polypeptide is Chaperone protein DnaK (Karelsulcia muelleri (strain GWSS) (Sulcia muelleri)).